The sequence spans 155 residues: Trypsin/factor XIIA inhibitor (155 aa).

The first 28 residues, 1–28, serve as a signal peptide directing secretion; the sequence is MASSSSSSHRRLILAAAVLLSVLAAASA. Cystine bridges form between Cys34-Cys83, Cys48-Cys72, Cys57-Cys114, Cys73-Cys132, and Cys85-Cys143. Arg62 is an active-site residue. Residues 139–155 constitute a propeptide, C-terminal peptide; sequence GVAECPWILGGGTMPSK.

The protein belongs to the protease inhibitor I6 (cereal trypsin/alpha-amylase inhibitor) family. Monomer.

The protein localises to the secreted. Functionally, potent inhibitor of mammalian trypsin and a specific inhibitor of factor XIIa (activated hageman factor). This Zea mays (Maize) protein is Trypsin/factor XIIA inhibitor.